The chain runs to 133 residues: Snaclec A9 (133 aa).

Cystine bridges form between Cys4–Cys15, Cys32–Cys131, and Cys106–Cys123. Residues Tyr11–Glu132 form the C-type lectin domain.

The protein belongs to the snaclec family. Heterodimer; disulfide-linked. Expressed by the venom gland.

The protein resides in the secreted. In terms of biological role, interferes with one step of hemostasis (modulation of platelet aggregation, or coagulation cascade, for example). In Macrovipera lebetinus (Levantine viper), this protein is Snaclec A9.